We begin with the raw amino-acid sequence, 647 residues long: UvrABC system protein C (647 aa).

In terms of domain architecture, GIY-YIG spans 16–95; sequence VEPGVYRFRD…IKEFDPRFNI (80 aa). The UVR domain maps to 208 to 243; the sequence is DRYARDLERKMSAAAEQLDFERAARLRDDLFALKRA.

This sequence belongs to the UvrC family. As to quaternary structure, interacts with UvrB in an incision complex.

The protein resides in the cytoplasm. Functionally, the UvrABC repair system catalyzes the recognition and processing of DNA lesions. UvrC both incises the 5' and 3' sides of the lesion. The N-terminal half is responsible for the 3' incision and the C-terminal half is responsible for the 5' incision. The sequence is that of UvrABC system protein C from Mycobacterium leprae (strain Br4923).